A 520-amino-acid polypeptide reads, in one-letter code: GMP synthase [glutamine-hydrolyzing] (520 aa).

A Glutamine amidotransferase type-1 domain is found at 9 to 202 (TVLIVDFGSQ…VHNIAGIEGD (194 aa)). The active-site Nucleophile is Cys86. Active-site residues include His176 and Glu178. The GMPS ATP-PPase domain maps to 203 to 395 (WTMRAYREHA…LGLPESFIGR (193 aa)). 230 to 236 (SGGVDSS) contacts ATP.

Homodimer.

The catalysed reaction is XMP + L-glutamine + ATP + H2O = GMP + L-glutamate + AMP + diphosphate + 2 H(+). The protein operates within purine metabolism; GMP biosynthesis; GMP from XMP (L-Gln route): step 1/1. In terms of biological role, catalyzes the synthesis of GMP from XMP. In Mesorhizobium japonicum (strain LMG 29417 / CECT 9101 / MAFF 303099) (Mesorhizobium loti (strain MAFF 303099)), this protein is GMP synthase [glutamine-hydrolyzing].